Here is a 314-residue protein sequence, read N- to C-terminus: Homeobox protein knotted-1-like 3 (314 aa).

Residues 218–238 (ELKIELKQGFKSRIEDVREEI) form the ELK domain. The homeobox; TALE-type DNA-binding region spans 239 to 302 (LRKRRAGKLP…NQRKRNWHNN (64 aa)).

It belongs to the TALE/KNOX homeobox family. In terms of tissue distribution, isoform 1 is expressed in roots and flowers, and at lower levels in leaf blades and leaf sheaths. Isoform 2 is expressed in roots and flowers.

It is found in the nucleus. The protein is Homeobox protein knotted-1-like 3 (HOS66) of Oryza sativa subsp. japonica (Rice).